We begin with the raw amino-acid sequence, 363 residues long: Ribosomal RNA large subunit methyltransferase M (363 aa).

S-adenosyl-L-methionine-binding positions include Ser194, 227-230 (CPGG), Asp246, Asp266, and Asp284. Lys313 (proton acceptor) is an active-site residue.

Belongs to the class I-like SAM-binding methyltransferase superfamily. RNA methyltransferase RlmE family. RlmM subfamily. In terms of assembly, monomer.

The protein resides in the cytoplasm. It catalyses the reaction cytidine(2498) in 23S rRNA + S-adenosyl-L-methionine = 2'-O-methylcytidine(2498) in 23S rRNA + S-adenosyl-L-homocysteine + H(+). Catalyzes the 2'-O-methylation at nucleotide C2498 in 23S rRNA. This Haemophilus influenzae (strain PittGG) protein is Ribosomal RNA large subunit methyltransferase M.